Here is a 245-residue protein sequence, read N- to C-terminus: Nodulation protein G (245 aa).

11–35 (VTGASGGIGEAIARVLHAQGAIVGL) serves as a coordination point for NAD(+). Ser139 serves as a coordination point for substrate. The active-site Proton acceptor is the Tyr152.

It belongs to the short-chain dehydrogenases/reductases (SDR) family.

Its function is as follows. Proposed to modify Nod factor fatty acyl chain. The chain is Nodulation protein G (nodG) from Rhizobium sp. (strain N33).